Here is a 431-residue protein sequence, read N- to C-terminus: Probable prephenate dehydrogenase [NADP(+)] (431 aa).

NADP(+) is bound at residue phenylalanine 5–aspartate 34. The 281-residue stretch at phenylalanine 5 to glycine 285 folds into the Prephenate/arogenate dehydrogenase domain.

Belongs to the prephenate/arogenate dehydrogenase family.

It localises to the cytoplasm. It carries out the reaction prephenate + NADP(+) = 3-(4-hydroxyphenyl)pyruvate + CO2 + NADPH. Its pathway is amino-acid biosynthesis; L-tyrosine biosynthesis; (4-hydroxyphenyl)pyruvate from prephenate (NADP(+) route): step 1/1. The protein is Probable prephenate dehydrogenase [NADP(+)] (tyr1) of Schizosaccharomyces pombe (strain 972 / ATCC 24843) (Fission yeast).